We begin with the raw amino-acid sequence, 236 residues long: 2,3,4,5-tetrahydropyridine-2,6-dicarboxylate N-acetyltransferase (236 aa).

This sequence belongs to the transferase hexapeptide repeat family. DapH subfamily.

It carries out the reaction (S)-2,3,4,5-tetrahydrodipicolinate + acetyl-CoA + H2O = L-2-acetamido-6-oxoheptanedioate + CoA. It functions in the pathway amino-acid biosynthesis; L-lysine biosynthesis via DAP pathway; LL-2,6-diaminopimelate from (S)-tetrahydrodipicolinate (acetylase route): step 1/3. Its function is as follows. Catalyzes the transfer of an acetyl group from acetyl-CoA to tetrahydrodipicolinate. The polypeptide is 2,3,4,5-tetrahydropyridine-2,6-dicarboxylate N-acetyltransferase (Geobacillus kaustophilus (strain HTA426)).